The primary structure comprises 103 residues: Large ribosomal subunit protein uL24 (103 aa).

It belongs to the universal ribosomal protein uL24 family. In terms of assembly, part of the 50S ribosomal subunit.

In terms of biological role, one of two assembly initiator proteins, it binds directly to the 5'-end of the 23S rRNA, where it nucleates assembly of the 50S subunit. Functionally, one of the proteins that surrounds the polypeptide exit tunnel on the outside of the subunit. This Pediococcus pentosaceus (strain ATCC 25745 / CCUG 21536 / LMG 10740 / 183-1w) protein is Large ribosomal subunit protein uL24.